The sequence spans 215 residues: Cytochrome c biogenesis ATP-binding export protein CcmA (215 aa).

In terms of domain architecture, ABC transporter spans 12-215 (LAAHALTYSR…TRLLHLQKAP (204 aa)). Position 44-51 (44-51 (GPNGIGKT)) interacts with ATP.

The protein belongs to the ABC transporter superfamily. CcmA exporter (TC 3.A.1.107) family. The complex is composed of two ATP-binding proteins (CcmA) and two transmembrane proteins (CcmB).

Its subcellular location is the cell inner membrane. It carries out the reaction heme b(in) + ATP + H2O = heme b(out) + ADP + phosphate + H(+). In terms of biological role, part of the ABC transporter complex CcmAB involved in the biogenesis of c-type cytochromes; once thought to export heme, this seems not to be the case, but its exact role is uncertain. Responsible for energy coupling to the transport system. The polypeptide is Cytochrome c biogenesis ATP-binding export protein CcmA (Xylella fastidiosa (strain Temecula1 / ATCC 700964)).